The sequence spans 325 residues: Putative S-adenosyl-L-methionine-dependent methyltransferase MT0917 (325 aa).

S-adenosyl-L-methionine is bound by residues Asp-126 and 155 to 156 (DL).

The protein belongs to the UPF0677 family.

Exhibits S-adenosyl-L-methionine-dependent methyltransferase activity. This Mycobacterium tuberculosis (strain CDC 1551 / Oshkosh) protein is Putative S-adenosyl-L-methionine-dependent methyltransferase MT0917.